The chain runs to 101 residues: Urease subunit beta (101 aa).

Belongs to the urease beta subunit family. As to quaternary structure, heterotrimer of UreA (gamma), UreB (beta) and UreC (alpha) subunits. Three heterotrimers associate to form the active enzyme.

It is found in the cytoplasm. The catalysed reaction is urea + 2 H2O + H(+) = hydrogencarbonate + 2 NH4(+). Its pathway is nitrogen metabolism; urea degradation; CO(2) and NH(3) from urea (urease route): step 1/1. The protein is Urease subunit beta of Rhizobium etli (strain CIAT 652).